The primary structure comprises 64 residues: Defensin beta 4A (64 aa).

The signal sequence occupies residues 1 to 23 (MRVLYLLFSFLFIFLMPLPGVFG). Disulfide bonds link Cys-31/Cys-60, Cys-38/Cys-53, and Cys-43/Cys-61. A phosphatidylinositol 4,5-bisphosphate (PIP2) binding region spans residues 33–48 (KSGAICHPVFCPRRYK).

The protein belongs to the beta-defensin family. LAP/TAP subfamily. Monomer. Homodimer. As to expression, expressed in lung epithelial cells (at protein level). Expressed in foreskin, lung and trachea. Lower expression in kidney, uterus and salivary gland tissue. Expressed in epithelial cells of the respiratory tract, with higher expression in distal parenchyma of the lung, trachea, and tonsils, and lower expression in pharynx and adenoid, and low expression in tongue and larynx.

It is found in the secreted. Functionally, exhibits antimicrobial activity against Gram-negative bacteria and Gram-positive bacteria, with highest activity against Gram-negative bacteria. Antimicrobial activity against P.aruginosa seems to be salt-sensitive and is reduced with high salt concentrations greater than 25 mM. Also exhibits antimicrobial activity against the yeast C.albicans. Permeabilizes C.albicans cell membranes via targeting plasma membrane lipid phosphatidylinositol 4,5-bisphosphate (PIP2), thereby leading to cell fragmentation and cell death. Acts as a ligand for C-C chemokine receptor CCR6. Binds to CCR6 and induces chemotactic activity of CCR6-expressing cells, such as immature dendritic cells and memory T cells. The polypeptide is Defensin beta 4A (DEFB4A) (Homo sapiens (Human)).